The chain runs to 463 residues: Glycine--tRNA ligase (463 aa).

Substrate is bound by residues Arg102 and Glu165. ATP-binding positions include 197–199 (RNE), 207–212 (FRTREF), 284–285 (EL), and 328–331 (GLTR). A substrate-binding site is contributed by 212–216 (FEQME). 324–328 (EPAAG) contacts substrate.

Belongs to the class-II aminoacyl-tRNA synthetase family. As to quaternary structure, homodimer.

The protein localises to the cytoplasm. The enzyme catalyses tRNA(Gly) + glycine + ATP = glycyl-tRNA(Gly) + AMP + diphosphate. Its function is as follows. Catalyzes the attachment of glycine to tRNA(Gly). This chain is Glycine--tRNA ligase, found in Mycobacterium bovis (strain ATCC BAA-935 / AF2122/97).